The following is a 72-amino-acid chain: Translation initiation factor IF-1 (72 aa).

Positions methionine 1–lysine 72 constitute an S1-like domain.

It belongs to the IF-1 family. Component of the 30S ribosomal translation pre-initiation complex which assembles on the 30S ribosome in the order IF-2 and IF-3, IF-1 and N-formylmethionyl-tRNA(fMet); mRNA recruitment can occur at any time during PIC assembly.

It is found in the cytoplasm. Functionally, one of the essential components for the initiation of protein synthesis. Stabilizes the binding of IF-2 and IF-3 on the 30S subunit to which N-formylmethionyl-tRNA(fMet) subsequently binds. Helps modulate mRNA selection, yielding the 30S pre-initiation complex (PIC). Upon addition of the 50S ribosomal subunit IF-1, IF-2 and IF-3 are released leaving the mature 70S translation initiation complex. This Burkholderia thailandensis (strain ATCC 700388 / DSM 13276 / CCUG 48851 / CIP 106301 / E264) protein is Translation initiation factor IF-1.